A 156-amino-acid chain; its full sequence is Small ribosomal subunit protein uS7 (156 aa).

The protein belongs to the universal ribosomal protein uS7 family. Part of the 30S ribosomal subunit. Contacts proteins S9 and S11.

Functionally, one of the primary rRNA binding proteins, it binds directly to 16S rRNA where it nucleates assembly of the head domain of the 30S subunit. Is located at the subunit interface close to the decoding center, probably blocks exit of the E-site tRNA. This Thermobifida fusca (strain YX) protein is Small ribosomal subunit protein uS7.